Reading from the N-terminus, the 79-residue chain is Ribonuclease P protein component 1 (79 aa).

Belongs to the eukaryotic/archaeal RNase P protein component 1 family. Consists of a catalytic RNA component and at least 4-5 protein subunits.

The protein resides in the cytoplasm. The catalysed reaction is Endonucleolytic cleavage of RNA, removing 5'-extranucleotides from tRNA precursor.. In terms of biological role, part of ribonuclease P, a protein complex that generates mature tRNA molecules by cleaving their 5'-ends. This chain is Ribonuclease P protein component 1, found in Saccharolobus solfataricus (strain ATCC 35092 / DSM 1617 / JCM 11322 / P2) (Sulfolobus solfataricus).